The sequence spans 134 residues: Transcription antitermination protein NusB (134 aa).

It belongs to the NusB family.

Involved in transcription antitermination. Required for transcription of ribosomal RNA (rRNA) genes. Binds specifically to the boxA antiterminator sequence of the ribosomal RNA (rrn) operons. This Shewanella loihica (strain ATCC BAA-1088 / PV-4) protein is Transcription antitermination protein NusB.